The sequence spans 430 residues: Signal recognition particle receptor FtsY (430 aa).

The tract at residues 75–95 (DTGELPAVGDDATVPRDSPRH) is disordered. GTP contacts are provided by residues 238-245 (GVNGTGKT), 320-324 (DTAGR), and 382-385 (TKLD).

The protein belongs to the GTP-binding SRP family. FtsY subfamily. In terms of assembly, part of the signal recognition particle protein translocation system, which is composed of SRP and FtsY.

The protein localises to the cell membrane. It localises to the cytoplasm. It carries out the reaction GTP + H2O = GDP + phosphate + H(+). Functionally, involved in targeting and insertion of nascent membrane proteins into the cytoplasmic membrane. Acts as a receptor for the complex formed by the signal recognition particle (SRP) and the ribosome-nascent chain (RNC). This Mycobacterium leprae (strain TN) protein is Signal recognition particle receptor FtsY.